Consider the following 167-residue polypeptide: Iron-sulfur cluster assembly enzyme ISCU (167 aa).

The transit peptide at 1 to 34 directs the protein to the mitochondrion; it reads MAAAGAFRLRRAASALLLRSPRLPARELSAPARL. The residue at position 14 (Ser-14) is a Phosphoserine; by MTOR. Pro-46 lines the Zn(2+) pocket. Cys-69 serves as the catalytic Cysteine persulfide intermediate. Position 69 is a cysteine persulfide (Cys-69). Residues Gly-70, Asp-71, Cys-95, Lys-112, and Cys-138 each contribute to the Zn(2+) site. Cys-138 (cysteine persulfide intermediate) is an active-site residue. The residue at position 138 (Cys-138) is a Cysteine persulfide.

It belongs to the NifU family. As to quaternary structure, homodimer; Tyr-35-mediated dimerization of two iron- and sulfide-containing ISCU subunit bind to the cysteine desulfurase complex. Component of the mitochondrial core iron-sulfur cluster (ISC) complex composed of NFS1, LYRM4, NDUFAB1, ISCU, FXN, and FDX2; this complex is an heterohexamer containing two copies of each monomer. Interacts (D-state) with NFS1 (homodimer form); each monomer interacts with the C-terminal regions of each NFS1 monomer. Interacts (monomer form) with FXN (via ferrous form); the interaction is possible when both are bound to the dimeric form of the cysteine desulfurase complex (NFS1:LYRM4) and enhances FXN interaction to the dimeric form of the cysteine desulfurase complex (NFS1:LYRM4). Interacts with GLRX5. Interacts (D-state) with HSPA9. Interacts (S-state) with HSCB; this interaction stimulates the ATPase activity of HSPA9. Component of the cytoplasmic core iron-sulfur cluster (ISC) complex composed at least of NFS1, LYRM4, and ISCU; this complex interacts with FXN. Monomer; each monomer binds to the C-terminal regions of NFS1 (cytoplasmic and homodimer form). Interacts with NFS1 (cytoplasmic and homodimer form); this interaction promotes de novo iron-sulfur cluster formation. Interacts with HSCB (cytoplasmic form); this interaction stabilizes the (Fe-S) clusters on ISCU. Phosphorylation at Ser-14 is required for ISCU protein stabilization in the cytosol, whereas dephosphorylation of Ser-14, due to the inhibition of mTORC1 (mammalian target of rapamycin complex 1) complex, leads to degradation of the precursor form and ultimately to a decrease in the mitochondrial mature form. In terms of processing, cysteine persulfide is reduced by thiol-containing molecules such as glutathione and L-cysteine. In terms of tissue distribution, detected in heart, liver, skeletal muscle, brain, pancreas, kidney, lung and placenta.

Its subcellular location is the mitochondrion. The protein resides in the cytoplasm. It is found in the nucleus. Mitochondrial scaffold protein, of the core iron-sulfur cluster (ISC) assembly complex, that provides the structural architecture on which the [2Fe-2S] clusters are assembled. The core iron-sulfur cluster (ISC) assembly complex is involved in the de novo synthesis of a [2Fe-2S] cluster, the first step of the mitochondrial iron-sulfur protein biogenesis. This process is initiated by the cysteine desulfurase complex (NFS1:LYRM4:NDUFAB1) that produces persulfide which is delivered on the scaffold protein ISCU in a FXN-dependent manner. Then this complex is stabilized by FDX2 which provides reducing equivalents to accomplish the [2Fe-2S] cluster assembly. Finally, the [2Fe-2S] cluster is transferred from ISCU to chaperone proteins, including HSCB, HSPA9 and GLRX5. Exists as two slow interchanging conformational states, a structured (S) and disordered (D) form. May modulate NFS1 desulfurase activity in a zinc-dependent manner. Modulates the interaction between FXN and the cysteine desulfurase complex. In terms of biological role, cytoplasmic scaffold protein, of the cytoplasmic core iron-sulfur cluster (ISC) assembly complex that provides the structural architecture on which the Fe-S clusters are assembled and may be involved in the cytoplasmic iron-sulfur protein biogenesis. The protein is Iron-sulfur cluster assembly enzyme ISCU of Homo sapiens (Human).